A 452-amino-acid polypeptide reads, in one-letter code: Tubulin alpha-1 chain (452 aa).

Position 11 (glutamine 11) interacts with GTP. Lysine 40 is modified (N6-acetyllysine). GTP-binding residues include glutamate 71, glycine 144, threonine 145, threonine 179, asparagine 206, and asparagine 228. Glutamate 71 contacts Mg(2+). Glutamate 254 is an active-site residue. The segment at lysine 430–tyrosine 452 is disordered. The segment covering aspartate 431–tyrosine 452 has biased composition (acidic residues).

The protein belongs to the tubulin family. Dimer of alpha and beta chains. A typical microtubule is a hollow water-filled tube with an outer diameter of 25 nm and an inner diameter of 15 nM. Alpha-beta heterodimers associate head-to-tail to form protofilaments running lengthwise along the microtubule wall with the beta-tubulin subunit facing the microtubule plus end conferring a structural polarity. Microtubules usually have 13 protofilaments but different protofilament numbers can be found in some organisms and specialized cells. It depends on Mg(2+) as a cofactor. Post-translationally, undergoes a tyrosination/detyrosination cycle, the cyclic removal and re-addition of a C-terminal tyrosine residue by the enzymes tubulin tyrosine carboxypeptidase (TTCP) and tubulin tyrosine ligase (TTL), respectively. In terms of processing, acetylation of alpha chains at Lys-40 stabilizes microtubules and affects affinity and processivity of microtubule motors. This modification has a role in multiple cellular functions, ranging from cell motility, cell cycle progression or cell differentiation to intracellular trafficking and signaling.

Its subcellular location is the cytoplasm. The protein localises to the cytoskeleton. The catalysed reaction is GTP + H2O = GDP + phosphate + H(+). Its function is as follows. Tubulin is the major constituent of microtubules, a cylinder consisting of laterally associated linear protofilaments composed of alpha- and beta-tubulin heterodimers. Microtubules grow by the addition of GTP-tubulin dimers to the microtubule end, where a stabilizing cap forms. Below the cap, tubulin dimers are in GDP-bound state, owing to GTPase activity of alpha-tubulin. The protein is Tubulin alpha-1 chain (TUBA1) of Pisum sativum (Garden pea).